Consider the following 334-residue polypeptide: DNA-directed RNA polymerase subunit alpha (334 aa).

An alpha N-terminal domain (alpha-NTD) region spans residues 1–234; it reads MQRSLNEFLT…QQLAVFVDFD (234 aa). Positions 248–334 are alpha C-terminal domain (alpha-CTD); it reads IDPILLRPVD…IRGDDRVLGG (87 aa).

The protein belongs to the RNA polymerase alpha chain family. In terms of assembly, homodimer. The RNAP catalytic core consists of 2 alpha, 1 beta, 1 beta' and 1 omega subunit. When a sigma factor is associated with the core the holoenzyme is formed, which can initiate transcription.

The enzyme catalyses RNA(n) + a ribonucleoside 5'-triphosphate = RNA(n+1) + diphosphate. Functionally, DNA-dependent RNA polymerase catalyzes the transcription of DNA into RNA using the four ribonucleoside triphosphates as substrates. The polypeptide is DNA-directed RNA polymerase subunit alpha (Hahella chejuensis (strain KCTC 2396)).